A 318-amino-acid chain; its full sequence is L-lactate dehydrogenase (318 aa).

Residues Val-18, Asp-39, Lys-44, Tyr-69, and 83–84 (GA) contribute to the NAD(+) site. Residues Gln-86 and Arg-92 each contribute to the substrate site. Residues Ser-105, 122–124 (VSN), and Ser-147 each bind NAD(+). 124-127 (NPVD) contacts substrate. Position 152 to 155 (152 to 155 (DTSR)) interacts with substrate. His-179 acts as the Proton acceptor in catalysis. Tyr-225 carries the post-translational modification Phosphotyrosine. Substrate is bound at residue Thr-234.

The protein belongs to the LDH/MDH superfamily. LDH family. As to quaternary structure, homotetramer.

It localises to the cytoplasm. The catalysed reaction is (S)-lactate + NAD(+) = pyruvate + NADH + H(+). Its pathway is fermentation; pyruvate fermentation to lactate; (S)-lactate from pyruvate: step 1/1. Catalyzes the conversion of lactate to pyruvate. This is L-lactate dehydrogenase from Clostridium botulinum (strain ATCC 19397 / Type A).